The following is a 263-amino-acid chain: S-adenosylmethionine decarboxylase proenzyme (263 aa).

Residue S113 is the Schiff-base intermediate with substrate; via pyruvic acid of the active site. Position 113 is a pyruvic acid (Ser); by autocatalysis (S113). The active-site Proton acceptor; for processing activity is the H118. Residue C141 is the Proton donor; for catalytic activity of the active site.

This sequence belongs to the prokaryotic AdoMetDC family. Type 2 subfamily. As to quaternary structure, heterooctamer of four alpha and four beta chains arranged as a tetramer of alpha/beta heterodimers. The cofactor is pyruvate. In terms of processing, is synthesized initially as an inactive proenzyme. Formation of the active enzyme involves a self-maturation process in which the active site pyruvoyl group is generated from an internal serine residue via an autocatalytic post-translational modification. Two non-identical subunits are generated from the proenzyme in this reaction, and the pyruvate is formed at the N-terminus of the alpha chain, which is derived from the carboxyl end of the proenzyme. The post-translation cleavage follows an unusual pathway, termed non-hydrolytic serinolysis, in which the side chain hydroxyl group of the serine supplies its oxygen atom to form the C-terminus of the beta chain, while the remainder of the serine residue undergoes an oxidative deamination to produce ammonia and the pyruvoyl group blocking the N-terminus of the alpha chain.

It carries out the reaction S-adenosyl-L-methionine + H(+) = S-adenosyl 3-(methylsulfanyl)propylamine + CO2. It functions in the pathway amine and polyamine biosynthesis; S-adenosylmethioninamine biosynthesis; S-adenosylmethioninamine from S-adenosyl-L-methionine: step 1/1. Catalyzes the decarboxylation of S-adenosylmethionine to S-adenosylmethioninamine (dcAdoMet), the propylamine donor required for the synthesis of the polyamines spermine and spermidine from the diamine putrescine. The sequence is that of S-adenosylmethionine decarboxylase proenzyme from Marinobacter nauticus (strain ATCC 700491 / DSM 11845 / VT8) (Marinobacter aquaeolei).